We begin with the raw amino-acid sequence, 253 residues long: uncharacterized protein (253 aa).

Residue 10–34 coordinates NADP(+); the sequence is LVTGASSGLGRGLALWLARRGVRVF. S142 contributes to the substrate binding site. The Proton acceptor role is filled by Y155.

It belongs to the short-chain dehydrogenases/reductases (SDR) family.

This is an uncharacterized protein from Myxococcus xanthus (strain DK1622).